The chain runs to 215 residues: ATP-dependent dethiobiotin synthetase BioD (215 aa).

13–18 (DIGKTI) contacts ATP. Position 17 (Thr-17) interacts with Mg(2+). Residue Lys-38 is part of the active site. Thr-42 contacts substrate. ATP contacts are provided by residues Asp-50, 115–118 (EGAG), and 175–176 (NH). Mg(2+) is bound by residues Asp-50 and Glu-115.

This sequence belongs to the dethiobiotin synthetase family. Homodimer. The cofactor is Mg(2+).

Its subcellular location is the cytoplasm. It carries out the reaction (7R,8S)-7,8-diammoniononanoate + CO2 + ATP = (4R,5S)-dethiobiotin + ADP + phosphate + 3 H(+). The protein operates within cofactor biosynthesis; biotin biosynthesis; biotin from 7,8-diaminononanoate: step 1/2. Functionally, catalyzes a mechanistically unusual reaction, the ATP-dependent insertion of CO2 between the N7 and N8 nitrogen atoms of 7,8-diaminopelargonic acid (DAPA, also called 7,8-diammoniononanoate) to form a ureido ring. This is ATP-dependent dethiobiotin synthetase BioD from Neisseria meningitidis serogroup A / serotype 4A (strain DSM 15465 / Z2491).